Reading from the N-terminus, the 228-residue chain is Octanoyltransferase (228 aa).

The BPL/LPL catalytic domain maps to 40–225 (GEEAERVWLV…SFERVFDAAP (186 aa)). Substrate-binding positions include 79 to 86 (RGGQWTYH), 156 to 158 (AIG), and 169 to 171 (GIA). Cys-187 serves as the catalytic Acyl-thioester intermediate.

The protein belongs to the LipB family.

The protein resides in the cytoplasm. The catalysed reaction is octanoyl-[ACP] + L-lysyl-[protein] = N(6)-octanoyl-L-lysyl-[protein] + holo-[ACP] + H(+). Its pathway is protein modification; protein lipoylation via endogenous pathway; protein N(6)-(lipoyl)lysine from octanoyl-[acyl-carrier-protein]: step 1/2. In terms of biological role, catalyzes the transfer of endogenously produced octanoic acid from octanoyl-acyl-carrier-protein onto the lipoyl domains of lipoate-dependent enzymes. Lipoyl-ACP can also act as a substrate although octanoyl-ACP is likely to be the physiological substrate. The polypeptide is Octanoyltransferase (Acidiphilium cryptum (strain JF-5)).